The primary structure comprises 330 residues: DNA repair and recombination protein RadA (330 aa).

124–131 (GEFGSGKT) lines the ATP pocket.

Belongs to the eukaryotic RecA-like protein family.

In terms of biological role, involved in DNA repair and in homologous recombination. Binds and assemble on single-stranded DNA to form a nucleoprotein filament. Hydrolyzes ATP in a ssDNA-dependent manner and promotes DNA strand exchange between homologous DNA molecules. The sequence is that of DNA repair and recombination protein RadA from Pyrobaculum neutrophilum (strain DSM 2338 / JCM 9278 / NBRC 100436 / V24Sta) (Thermoproteus neutrophilus).